The following is a 517-amino-acid chain: Xylosidase/arabinosidase (517 aa).

The active-site Proton acceptor is aspartate 15. Glutamate 185 functions as the Proton donor in the catalytic mechanism.

This sequence belongs to the glycosyl hydrolase 43 family.

The catalysed reaction is Hydrolysis of (1-&gt;4)-beta-D-xylans, to remove successive D-xylose residues from the non-reducing termini.. The enzyme catalyses Hydrolysis of terminal non-reducing alpha-L-arabinofuranoside residues in alpha-L-arabinosides.. Has a 1.6-fold higher activity as an arabinosidase than as a beta-xylosidase when tested on the substrates nitrophenyl-beta-D-xylopyranoside and P-nitrophenyl-alpha-L-arabinofuranoside. This Butyrivibrio fibrisolvens protein is Xylosidase/arabinosidase (xylB).